The chain runs to 768 residues: Vacuolar basic amino acid transporter 4 (768 aa).

Over 1 to 252 the chain is Cytoplasmic; it reads MGKKDRQRKK…HDLTRRRIFS (252 aa). Residues 9–40 adopt a coiled-coil conformation; sequence KKLREFAKLKNRQRNLRKSVQTLKNEVQREAK. The tract at residues 34–172 is disordered; sequence EVQREAKVPR…ELPVSSSNSF (139 aa). Ser-62, Ser-99, and Ser-106 each carry phosphoserine. Residues 110-121 are compositionally biased toward basic and acidic residues; that stretch reads KPADKANEDDLK. Polar residues predominate over residues 132–159; the sequence is SALQSSITDFSDRSVSPLQSITSCNTPM. Residues Ser-160 and Ser-192 each carry the phosphoserine modification. Residues 253 to 273 traverse the membrane as a helical segment; that stretch reads SCMCTYLFFIAMDSSIILVIA. Topologically, residues 274–282 are vacuolar; that stretch reads SKIASEFHE. The helical transmembrane segment at 283–305 threads the bilayer; the sequence is LWRLSLVISAYLLSNAIGQLVFL. Over 306–311 the chain is Cytoplasmic; it reads KLSLIS. The helical transmembrane segment at 312 to 331 threads the bilayer; that stretch reads SVKLLLCIAQFSFILGGYLS. Residues 332–334 lie on the Vacuolar side of the membrane; that stretch reads WSS. A helical membrane pass occupies residues 335 to 357; sequence AHFWTFIFARCVTGFGGGSLIAL. Residues 358-375 lie on the Cytoplasmic side of the membrane; sequence KSTIMNRFSQKNDSRYSL. Residues 376–396 form a helical membrane-spanning segment; the sequence is SASMITFAMGVVIGPFMMNLF. Residues 397-406 are Vacuolar-facing; that stretch reads DSSHGSGWRN. The chain crosses the membrane as a helical span at residues 407–427; the sequence is AFLIPVPFCLVNASIMLADMY. Residues 428-447 lie on the Cytoplasmic side of the membrane; that stretch reads SVKSTLYGRPTPTLWKRFKN. Residues 448–468 traverse the membrane as a helical segment; the sequence is TLLSPDLYEILTLTLFLLCFV. Residues 469–481 lie on the Vacuolar side of the membrane; sequence QVTSLDLTGLKNN. The N-linked (GlcNAc...) asparagine glycan is linked to Asn-480. A helical membrane pass occupies residues 482–502; the sequence is TMIQALLFSVIIVCGILFFLI. At 503-522 the chain is on the cytoplasmic side; the sequence is ETSDTYMNSVISMSLQGDKR. The chain crosses the membrane as a helical span at residues 523-543; sequence LIWTMIGISFCFAALMCIIPF. The Vacuolar segment spans residues 544–562; the sequence is GTTYFIIVLNLSTLQLAER. N-linked (GlcNAc...) asparagine glycosylation occurs at Asn-553. A helical membrane pass occupies residues 563–583; sequence LSPFFFSIVLGYFSVSYFWKS. Topologically, residues 584–587 are cytoplasmic; the sequence is KGQN. A helical membrane pass occupies residues 588–608; the sequence is FLLKFVLSGATLLLYVALMGV. Residues 609-617 lie on the Vacuolar side of the membrane; sequence SLNLPVWKQ. Residues 618-638 form a helical membrane-spanning segment; it reads YICLSLPFLGSSMILTLLSNL. Residues 639 to 653 lie on the Cytoplasmic side of the membrane; that stretch reads YHEYHEQRKSPISGS. The helical transmembrane segment at 654–674 threads the bilayer; the sequence is IVYCFGAVGGTVGISLGGYVF. Residues 675 to 734 lie on the Vacuolar side of the membrane; sequence HKTLIKLMHEKVMPFSKQGYLKKDLLKIIKHATESSDWVHESAPKFVFQTLIECYLQACR. A helical membrane pass occupies residues 735–755; sequence NVFKLSTLFFTITVVAIFIFN. The Cytoplasmic segment spans residues 756–768; it reads RIHCRSQNCLSLS.

It belongs to the major facilitator superfamily.

The protein resides in the vacuole membrane. Transporter required for vacuolar uptake of basic amino acids. This is Vacuolar basic amino acid transporter 4 (VBA4) from Saccharomyces cerevisiae (strain ATCC 204508 / S288c) (Baker's yeast).